The primary structure comprises 453 residues: uncharacterized protein (453 aa).

An N-terminal signal peptide occupies residues 1-23; sequence MFLLQRFFIYGLFLACFYTTVFG. The Lumenal segment spans residues 24 to 137; that stretch reads EKHFEAEEYR…EKQFSYSSGT (114 aa). The chain crosses the membrane as a helical span at residues 138 to 158; that stretch reads NGILATFLTAIPPNIFILLVP. Residues 159–165 are Cytoplasmic-facing; the sequence is KSFDTSM. A helical membrane pass occupies residues 166–186; that stretch reads LNLFVAVSAGSLLGDVFLQLL. Topologically, residues 187–194 are lumenal; it reads PTVYSTNG. Residues 195 to 215 traverse the membrane as a helical segment; it reads GDFPASSVYSILIGALVFFLM. Residues 216-358 lie on the Cytoplasmic side of the membrane; that stretch reads DKGIRILIHE…LRNGYTKSQV (143 aa). Residues 229–238 show a composition bias toward basic and acidic residues; it reads SLSKPKKDGE. The interval 229–278 is disordered; sequence SLSKPKKDGEETSSVNKPSASSTQTDVKGVEGLRKRNVKDDQNSKGHEPD. Over residues 240–254 the composition is skewed to polar residues; it reads TSSVNKPSASSTQTD. Basic and acidic residues predominate over residues 256 to 278; sequence KGVEGLRKRNVKDDQNSKGHEPD. The chain crosses the membrane as a helical span at residues 359-379; sequence LVLQMITMVTGLLGAIVATYI. The Lumenal segment spans residues 380–399; the sequence is YTASSSSSPYGSFLLQLEDK. A helical transmembrane segment spans residues 400 to 420; it reads LLPFTAGGFLYIAYLGVFPEL. At 421 to 432 the chain is on the cytoplasmic side; that stretch reads LEINLSKGKLGN. Residues 433 to 453 form a helical membrane-spanning segment; sequence MIYTALYMMFIVGGFSFLYYV.

The protein belongs to the ZIP transporter (TC 2.A.5) family. KE4/Catsup subfamily.

It localises to the endoplasmic reticulum membrane. This is an uncharacterized protein from Schizosaccharomyces pombe (strain 972 / ATCC 24843) (Fission yeast).